The primary structure comprises 248 residues: DNA polymerase sliding clamp 2 (248 aa).

This sequence belongs to the PCNA family. In terms of assembly, homotrimer. The subunits circularize to form a toroid; DNA passes through its center. Replication factor C (RFC) is required to load the toroid on the DNA.

Its function is as follows. Sliding clamp subunit that acts as a moving platform for DNA processing. Responsible for tethering the catalytic subunit of DNA polymerase and other proteins to DNA during high-speed replication. In Sulfurisphaera ohwakuensis, this protein is DNA polymerase sliding clamp 2.